The following is an 81-amino-acid chain: Putative defensin-like protein 148 (81 aa).

A signal peptide spans 1 to 24; the sequence is MIKSFQLSFTVLIVFTVLILGVVG. Intrachain disulfides connect cysteine 34/cysteine 80, cysteine 43/cysteine 63, cysteine 48/cysteine 74, and cysteine 52/cysteine 76.

Belongs to the DEFL family.

It is found in the secreted. The chain is Putative defensin-like protein 148 (LCR4) from Arabidopsis thaliana (Mouse-ear cress).